The chain runs to 278 residues: Esterase dbaE (278 aa).

Active-site charge relay system residues include Ser-124, Asp-220, and His-248.

This sequence belongs to the LovG family.

It participates in secondary metabolite biosynthesis. Functionally, esterase; part of the gene cluster that mediates the biosynthesis of the antibiotic 2,4-dihydroxy-3-methyl-6-(2-oxopropyl)benzaldehyde (DHMBA) and its derivatives. The direct non-reducing polyketide synthase dbaI product is 2,4-dihydroxy-3-methyl-6-(2-oxopropyl)benzaldehyde (DHMBA), produced by condensation of one acetyl-CoA starter unit with 4 malonyl-CoA units and one methylation step. The FAD-dependent monooxygenase dbaH is responsible for the synthesis of yellow pigments derived from the oxidation of DHMBA. The roles of dbaB, C, E and F have still to be determined. This is Esterase dbaE from Emericella nidulans (strain FGSC A4 / ATCC 38163 / CBS 112.46 / NRRL 194 / M139) (Aspergillus nidulans).